The sequence spans 326 residues: D-alanine--D-alanine ligase (326 aa).

Residues 121 to 320 (ISVLRPYGIK…LKDLFGSTIE (200 aa)) form the ATP-grasp domain. 149–204 (VDKVGLPCFVKANRAGSSFGVTKVKTEDEIISAAKTAFTEDDEAIIESFLDGTEVS) is an ATP binding site. Residues Glu275, Glu287, and Asn289 each coordinate Mg(2+).

Belongs to the D-alanine--D-alanine ligase family. Mg(2+) serves as cofactor. It depends on Mn(2+) as a cofactor.

It is found in the cytoplasm. The enzyme catalyses 2 D-alanine + ATP = D-alanyl-D-alanine + ADP + phosphate + H(+). Its pathway is cell wall biogenesis; peptidoglycan biosynthesis. Its function is as follows. Cell wall formation. This Christiangramia forsetii (strain DSM 17595 / CGMCC 1.15422 / KT0803) (Gramella forsetii) protein is D-alanine--D-alanine ligase.